Reading from the N-terminus, the 409-residue chain is Dual-specificity RNA methyltransferase RlmN (409 aa).

The active-site Proton acceptor is the Glu-117. Residues 128–377 (LNGRKTLCIS…CTIRQTRGDD (250 aa)) form the Radical SAM core domain. Cys-135 and Cys-382 are joined by a disulfide. Residues Cys-142, Cys-146, and Cys-149 each contribute to the [4Fe-4S] cluster site. S-adenosyl-L-methionine is bound by residues 205–206 (GE), Ser-237, 259–261 (SLH), and Asn-339. The S-methylcysteine intermediate role is filled by Cys-382.

This sequence belongs to the radical SAM superfamily. RlmN family. Requires [4Fe-4S] cluster as cofactor.

It is found in the cytoplasm. The catalysed reaction is adenosine(2503) in 23S rRNA + 2 reduced [2Fe-2S]-[ferredoxin] + 2 S-adenosyl-L-methionine = 2-methyladenosine(2503) in 23S rRNA + 5'-deoxyadenosine + L-methionine + 2 oxidized [2Fe-2S]-[ferredoxin] + S-adenosyl-L-homocysteine. It carries out the reaction adenosine(37) in tRNA + 2 reduced [2Fe-2S]-[ferredoxin] + 2 S-adenosyl-L-methionine = 2-methyladenosine(37) in tRNA + 5'-deoxyadenosine + L-methionine + 2 oxidized [2Fe-2S]-[ferredoxin] + S-adenosyl-L-homocysteine. Specifically methylates position 2 of adenine 2503 in 23S rRNA and position 2 of adenine 37 in tRNAs. m2A2503 modification seems to play a crucial role in the proofreading step occurring at the peptidyl transferase center and thus would serve to optimize ribosomal fidelity. In Psychrobacter arcticus (strain DSM 17307 / VKM B-2377 / 273-4), this protein is Dual-specificity RNA methyltransferase RlmN.